Reading from the N-terminus, the 249-residue chain is Enolase-phosphatase E1 (249 aa).

It belongs to the HAD-like hydrolase superfamily. MasA/MtnC family. As to quaternary structure, monomer. It depends on Mg(2+) as a cofactor.

The catalysed reaction is 5-methylsulfanyl-2,3-dioxopentyl phosphate + H2O = 1,2-dihydroxy-5-(methylsulfanyl)pent-1-en-3-one + phosphate. It participates in amino-acid biosynthesis; L-methionine biosynthesis via salvage pathway; L-methionine from S-methyl-5-thio-alpha-D-ribose 1-phosphate: step 3/6. It functions in the pathway amino-acid biosynthesis; L-methionine biosynthesis via salvage pathway; L-methionine from S-methyl-5-thio-alpha-D-ribose 1-phosphate: step 4/6. In terms of biological role, bifunctional enzyme that catalyzes the enolization of 2,3-diketo-5-methylthiopentyl-1-phosphate (DK-MTP-1-P) into the intermediate 2-hydroxy-3-keto-5-methylthiopentenyl-1-phosphate (HK-MTPenyl-1-P), which is then dephosphorylated to form the acireductone 1,2-dihydroxy-3-keto-5-methylthiopentene (DHK-MTPene). The sequence is that of Enolase-phosphatase E1 from Pseudomonas aeruginosa (strain ATCC 15692 / DSM 22644 / CIP 104116 / JCM 14847 / LMG 12228 / 1C / PRS 101 / PAO1).